The following is a 373-amino-acid chain: COP9 signalosome complex subunit 5 (373 aa).

Residues 66 to 201 form the MPN domain; it reads CLISRLATTK…IGAFRTLPSK (136 aa). Zn(2+) contacts are provided by His147, His149, and Asp160. The short motif at 147-160 is the JAMM motif element; sequence HSHPGYGCWLSNID. Residues 289–325 are disordered; sequence FTHERSNSISSTSSLTTRHTTDVEMDDQESAQSSLDI. Low complexity predominate over residues 295 to 306; the sequence is NSISSTSSLTTR.

The protein belongs to the peptidase M67A family. CSN5 subfamily. Component of the COP9 signalosome (CSN) complex.

It localises to the cytoplasm. Its subcellular location is the nucleus. In terms of biological role, catalytic Component of the COP9 signalosome (CSN) complex that acts as an regulator of the ubiquitin (Ubl) conjugation pathway by mediating the deneddylation of the cullin subunit of SCF-type E3 ubiquitin-protein ligase complexes. The CNS complex is involved in the regulation of the mating pheromone response. This is COP9 signalosome complex subunit 5 (RRI1) from Kluyveromyces lactis (strain ATCC 8585 / CBS 2359 / DSM 70799 / NBRC 1267 / NRRL Y-1140 / WM37) (Yeast).